The chain runs to 292 residues: 2-(5''-triphosphoribosyl)-3'-dephosphocoenzyme-A synthase (292 aa).

Belongs to the CitG/MdcB family.

The enzyme catalyses 3'-dephospho-CoA + ATP = 2'-(5''-triphospho-alpha-D-ribosyl)-3'-dephospho-CoA + adenine. Its function is as follows. Catalyzes the formation of 2-(5''-triphosphoribosyl)-3'-dephosphocoenzyme-A, the precursor of the prosthetic group of the holo-acyl carrier protein (gamma chain) of citrate lyase, from ATP and dephospho-CoA. This Escherichia coli O127:H6 (strain E2348/69 / EPEC) protein is 2-(5''-triphosphoribosyl)-3'-dephosphocoenzyme-A synthase.